Consider the following 1011-residue polypeptide: Vacuolar membrane protease (1011 aa).

Residues 1–9 (MSNPFAFRS) are Cytoplasmic-facing. A helical transmembrane segment spans residues 10–30 (AQVTFWTTVVYLALLVPLVVI). Residues 31-378 (NEGVPPVQPD…TFVLFGLRGM (348 aa)) are Vacuolar-facing. N-linked (GlcNAc...) asparagine glycans are attached at residues Asn-50 and Asn-106. His-159 and Asp-171 together coordinate Zn(2+). Glu-205 acts as the Proton acceptor in catalysis. Zn(2+) contacts are provided by Glu-206, Glu-231, and His-304. Asn-331 carries an N-linked (GlcNAc...) asparagine glycan. Residues 379–399 (FAWSLTVLIVGPLTLFGMMYL) traverse the membrane as a helical segment. Residues 400–439 (VHKQGKGYAFHTKLRATSDSSSEDGDDEDGEVIRLGGWKG) lie on the Cytoplasmic side of the membrane. Residues 440 to 460 (FFRFPFALIVAGALVTGAALL) traverse the membrane as a helical segment. Residues 461–471 (LRKMNPFIIYS) are Vacuolar-facing. Residues 472 to 492 (SEYAVWAMMISLFYFGFWLIM) form a helical membrane-spanning segment. The Cytoplasmic portion of the chain corresponds to 493-505 (RGSSYTRPSALHR). A helical transmembrane segment spans residues 506 to 526 (LYVHIWLFILGWVALVFATVL). Over 527-536 (EDRMRIASGY) the chain is Vacuolar. The chain crosses the membrane as a helical span at residues 537–557 (IFVFWESQVFLATLVAVCELF). At 558 to 682 (SLPRKIDFAR…WSGPMVTSTW (125 aa)) the chain is on the cytoplasmic side. Over residues 595-609 (EATSPQRAGQSSNSP) the composition is skewed to polar residues. 2 disordered regions span residues 595–627 (EATSPQRAGQSSNSPQEDDEDDVPDEETPLFRK) and 650–671 (IMDSNNEAEDGPKRKQPFEGEQ). Over residues 610–622 (QEDDEDDVPDEET) the composition is skewed to acidic residues. The chain crosses the membrane as a helical span at residues 683–703 (ILQFLLLGPFMVILGGQVGLL). Residues 704 to 719 (LTSAVNQTGVDGSSLL) are Vacuolar-facing. Asn-709 carries an N-linked (GlcNAc...) asparagine glycan. Residues 720 to 740 (APYLMIAALSAILLMPLSPFI) traverse the membrane as a helical segment. Over 741–747 (HRVTKHV) the chain is Cytoplasmic. Residues 748-768 (PLFLLAVAFATLIYSLVAFPF) form a helical membrane-spanning segment. Residues 769–1011 (SPRAPYKTFF…LVEGSKAFKV (243 aa)) lie on the Vacuolar side of the membrane. Asn-872 carries N-linked (GlcNAc...) asparagine glycosylation.

The protein belongs to the peptidase M28 family. The cofactor is Zn(2+).

It is found in the vacuole membrane. May be involved in vacuolar sorting and osmoregulation. This Pyricularia oryzae (strain 70-15 / ATCC MYA-4617 / FGSC 8958) (Rice blast fungus) protein is Vacuolar membrane protease.